The primary structure comprises 211 residues: Shikimate kinase (211 aa).

The span at 1-13 (MNASANLCAASAN) shows a compositional bias: low complexity. Residues 1–24 (MNASANLCAASANDPQPGDQEAAH) are disordered. 50-55 (GAGKTT) provides a ligand contact to ATP. A Mg(2+)-binding site is contributed by Thr54. Substrate-binding residues include Asp72, Arg96, and Gly118. Residue Arg156 coordinates ATP. A substrate-binding site is contributed by Arg175.

This sequence belongs to the shikimate kinase family. In terms of assembly, monomer. Mg(2+) serves as cofactor.

It is found in the cytoplasm. It carries out the reaction shikimate + ATP = 3-phosphoshikimate + ADP + H(+). Its pathway is metabolic intermediate biosynthesis; chorismate biosynthesis; chorismate from D-erythrose 4-phosphate and phosphoenolpyruvate: step 5/7. Catalyzes the specific phosphorylation of the 3-hydroxyl group of shikimic acid using ATP as a cosubstrate. The polypeptide is Shikimate kinase (Bordetella parapertussis (strain 12822 / ATCC BAA-587 / NCTC 13253)).